Consider the following 260-residue polypeptide: tRNA pseudouridine synthase C (260 aa).

Residue D54 is part of the active site.

Belongs to the pseudouridine synthase RluA family.

It carries out the reaction uridine(65) in tRNA = pseudouridine(65) in tRNA. Its function is as follows. Responsible for synthesis of pseudouridine from uracil-65 in transfer RNAs. The chain is tRNA pseudouridine synthase C (truC) from Escherichia coli O157:H7.